Consider the following 634-residue polypeptide: Fluorothreonine transaldolase (634 aa).

The pyridoxal 5'-phosphate site is built by Tyr-67, His-221, and His-247. Residue Lys-248 is modified to N6-(pyridoxal phosphate)lysine. Position 375 (Arg-375) interacts with pyridoxal 5'-phosphate. Positions 428–456 (TGDPASAAGPPARERYAPPTAPAGHPARP) are disordered.

It belongs to the SHMT family. Pyridoxal 5'-phosphate is required as a cofactor.

The enzyme catalyses fluoroacetaldehyde + L-threonine = 4-fluoro-L-threonine + acetaldehyde. Functionally, transaldolase that catalyzes the final step in 4-fluorothreonine biosynthesis. Mediates a L-threonine/fluoroaceldehyde to 4-fluoro-L-threonine/acetaldehyde crossover reaction. Can also convert chloroacetaldehyde into 4-chloro-L-threonine. Does not use glycine as a substrate. The polypeptide is Fluorothreonine transaldolase (Streptantibioticus cattleyicolor (Streptomyces cattleya)).